Consider the following 2360-residue polypeptide: Nucleoprotein TPR (2360 aa).

Position 2 is an N-acetylalanine (Ala-2). The tract at residues 3–13 (AVLQQVLERPE) is sufficient for interaction with TPR. Residues 14–117 (LNKLPKSTQN…GIQSQFTRAK (104 aa)) are necessary for interaction with HSF1. Positions 24 to 370 (KLEKFLAEQQ…SATKRKGAIL (347 aa)) form a coiled coil. Lys-252, Lys-312, and Lys-345 each carry N6-acetyllysine. Ser-379 carries the phosphoserine modification. Positions 423–603 (LDEIVKEVEA…RESRQHQMQL (181 aa)) form a coiled coil. 3 positions are modified to N6-acetyllysine: Lys-428, Lys-457, and Lys-477. The tract at residues 437–513 (LKRQREEYER…LMELEEARGN (77 aa)) is necessary for association to the NPC. 3 positions are modified to phosphoserine: Ser-522, Ser-523, and Ser-632. Residues 664–1172 (ETIEAKAALK…IEKLSDKVVT (509 aa)) are a coiled coil. An N6-acetyllysine mark is found at Lys-713, Lys-723, Lys-748, and Lys-755. A compositionally biased stretch (polar residues) spans 915–924 (LASQSTQRTG). The segment at 915–939 (LASQSTQRTGKGQPGDRDDVDDLKS) is disordered. Residues 928–939 (PGDRDDVDDLKS) are compositionally biased toward basic and acidic residues. Phosphoserine is present on residues Ser-1180 and Ser-1185. Coiled coils occupy residues 1215–1420 (EVAQ…LDAK) and 1472–1629 (VQEM…QRDE). A necessary for interaction with HSF1 region spans residues 1218–1320 (QVESLRYRQR…NAELSEKSGM (103 aa)). 2 disordered regions span residues 1479–1520 (KDNL…TAQL) and 1618–1673 (EHQE…PTPV). Basic and acidic residues-rich tracts occupy residues 1503–1512 (LSEKETEARS) and 1618–1630 (EHQERHLEQRDEP). Positions 1632–1651 (EPTNKAPEQQRQITLKTTPA) are enriched in polar residues. N6-acetyllysine is present on Lys-1689. Thr-1691 bears the Phosphothreonine mark. Over residues 1801-1826 (QSSPVERPSTSTAVFGTVSATPSSSL) the composition is skewed to polar residues. The tract at residues 1801–2122 (QSSPVERPST…TPGIGGMQQH (322 aa)) is disordered. Residues 1811-1866 (STAVFGTVSATPSSSLPKRAREEEEDSTIEAGDQVSDDTVEMPLPKKLKTVTPVGT) form a sufficient and essential for mediating its nuclear import region. Residues 1866 to 1880 (TEEEVMAEESTDGEA) are compositionally biased toward acidic residues. The segment covering 1881-1892 (ETQTYNQDSQDS) has biased composition (polar residues). At Ser-1892 the chain carries Phosphoserine. Over residues 1923–1934 (QSDQQTTSSQDG) the composition is skewed to low complexity. Acidic residues-rich tracts occupy residues 1945-1986 (DSDD…EDSN) and 1996-2017 (DGYEADDAEGGDGTDPGTETEE). Over residues 2023 to 2061 (ESNQRAADSQNSGEGNTSAAESSFSQEVAREQQPTSASE) the composition is skewed to polar residues. Ser-2031, Ser-2034, Ser-2045, Ser-2047, and Ser-2070 each carry phosphoserine. Omega-N-methylarginine is present on residues Arg-2103 and Arg-2108. A phosphothreonine mark is found at Thr-2113 and Thr-2134. Ser-2152 carries the phosphoserine modification. Arg-2160 is modified (omega-N-methylarginine). The segment covering 2224-2241 (ESTTSDASEHASQSVPMV) has biased composition (polar residues). The tract at residues 2224–2360 (ESTTSDASEH…RGGINRGNIN (137 aa)) is disordered. Residues 2242–2254 (TTSTGTLSTTNET) show a composition bias toward low complexity. Acidic residues-rich tracts occupy residues 2256–2269 (AGDDGDEVFVETES) and 2282–2296 (SQQEEEPVQASDESD). The segment covering 2297–2317 (LPSTSQDPPSSSSVDTSSSQP) has biased composition (low complexity). Arg-2340, Arg-2342, and Arg-2351 each carry asymmetric dimethylarginine. Over residues 2349–2360 (GGRGGINRGNIN) the composition is skewed to gly residues.

The protein belongs to the TPR family. In terms of assembly, homodimer. Part of the nuclear pore complex (NPC). Associates with the XPO1/CRM1-mediated nuclear export complex, the Importin alpha/Importin beta receptor and the dynein 1 complex. Interacts (via C-terminal domain) with the KPNB1; the interaction occurs in a RanGTP-dependent manner. Interacts (via C-terminal region and phosphorylated form) with MAPK1/ERK2 (via phosphorylated form); the interaction requires dimerization of MAPK1/ERK2 and increases following EGF stimulation. Interacts with MAPK3/ERK1; the interaction increases following EGF stimulation. Interacts (via coiled coil region) with NUP153; the interaction is direct. Interacts with HSF1; the interaction increases in a stress-responsive manner and stimulates export of stress-induced HSP70 mRNA. Interacts with huntingtin/HTT; the interaction is inhibited by aggregated huntingtin/HTT forms with expanded polyglutamine stretch. Interacts with MAD1L1 (via N-terminal region), MAD2L1, and TTK; the interactions occurs in a microtubule-independent manner. Interacts (via middle region) with DYNLL1. Interacts with DCTN1, dynein, NUP153 and tubulin. Interacts with IFI204 (via C-terminal region). Interacts with IFI203. Interacts with MTA1. Interacts with ZC3HC1; this interaction mediates ZC3HC1 nuclear envelopes (NE)-association but also required for proper positioning of a substantial amount of TPR at the nuclear basket (NB). Post-translationally, phosphorylated. Phosphorylation occurs on serine and threonine residues (comprised in the C-terminal region) by MAPK1/ERK2 and stabilizes the interaction between these two proteins.

It localises to the nucleus. The protein resides in the nucleus membrane. It is found in the nucleus envelope. The protein localises to the nuclear pore complex. Its subcellular location is the cytoplasm. It localises to the cytoskeleton. The protein resides in the spindle. It is found in the chromosome. The protein localises to the centromere. Its subcellular location is the kinetochore. Component of the nuclear pore complex (NPC), a complex required for the trafficking across the nuclear envelope. Functions as a scaffolding element in the nuclear phase of the NPC essential for normal nucleocytoplasmic transport of proteins and mRNAs, plays a role in the establishment of nuclear-peripheral chromatin compartmentalization in interphase, and in the mitotic spindle checkpoint signaling during mitosis. Involved in the quality control and retention of unspliced mRNAs in the nucleus; in association with NUP153, regulates the nuclear export of unspliced mRNA species bearing constitutive transport element (CTE) in a NXF1- and KHDRBS1-independent manner. Negatively regulates both the association of CTE-containing mRNA with large polyribosomes and translation initiation. Does not play any role in Rev response element (RRE)-mediated export of unspliced mRNAs. Implicated in nuclear export of mRNAs transcribed from heat shock gene promoters; associates both with chromatin in the HSP70 promoter and with mRNAs transcribed from this promoter under stress-induced conditions. Modulates the nucleocytoplasmic transport of activated MAPK1/ERK2 and huntingtin/HTT and may serve as a docking site for the XPO1/CRM1-mediated nuclear export complex. Also plays a role as a structural and functional element of the perinuclear chromatin distribution; involved in the formation and/or maintenance of NPC-associated perinuclear heterochromatin exclusion zones (HEZs). Finally, acts as a spatial regulator of the spindle-assembly checkpoint (SAC) response ensuring a timely and effective recruitment of spindle checkpoint proteins like MAD1L1 and MAD2L1 to unattached kinetochore during the metaphase-anaphase transition before chromosome congression. Its N-terminus is involved in activation of oncogenic kinases. Plays a role in the regulation of nuclear protein export. The protein is Nucleoprotein TPR of Rattus norvegicus (Rat).